A 208-amino-acid polypeptide reads, in one-letter code: Small ribosomal subunit protein uS4 (208 aa).

Positions 98–161 constitute an S4 RNA-binding domain; sequence QRLDNVVYRM…KTNPQIVRAI (64 aa).

The protein belongs to the universal ribosomal protein uS4 family. As to quaternary structure, part of the 30S ribosomal subunit. Contacts protein S5. The interaction surface between S4 and S5 is involved in control of translational fidelity.

In terms of biological role, one of the primary rRNA binding proteins, it binds directly to 16S rRNA where it nucleates assembly of the body of the 30S subunit. Functionally, with S5 and S12 plays an important role in translational accuracy. This is Small ribosomal subunit protein uS4 from Campylobacter fetus subsp. fetus (strain 82-40).